Reading from the N-terminus, the 642-residue chain is Chaperone protein DnaK (642 aa).

T198 carries the phosphothreonine; by autocatalysis modification. Residues 602–642 form a disordered region; the sequence is AYAKMTEKQQSDDGAGTQNADHKEDDVVDADFEEVKSDKKD.

The protein belongs to the heat shock protein 70 family.

Acts as a chaperone. The chain is Chaperone protein DnaK from Dichelobacter nodosus (strain VCS1703A).